Here is a 566-residue protein sequence, read N- to C-terminus: MKQSMVFSPTLREVPADAEIKSHQLLLRAGFMRQNASGIYSFLPFGLKVLHKVERIVREEMERAGAVELLMPAMQAAELWQESGRWYSYGSELMRMKDRNAREFALGATHEEVITDLVRDEVKSYKKLPLTLYQIQTKFRDEQRPRFGLLRGREFLMKDAYSFHATQESLDEVYDRLYKAYSNIFARCGLNFRAVIADSGAMGGKDTHEFMVLSDVGEDTIAYSDTSDYAANIEMAPVVATYTKSDEAEKALEKVATPDQKAIEEVSAFLNIEADKCIKSMVFKVDEKLVVVLVRGDHEVNDVKVKNVYGASVVELASHEEVKALLNWEVGSLGPINVTGDIEIIADHAVASIVNGCSGANEEGFHYVNVNPERDFKVSQYTDLRFIQEGDQSPDGNGTILFARGIEVGHVFKLGTRYSEAMNATFLDENGKTQPLIMGCYGIGVSRTVAAIAEQFNDENGLVWPKAVAPFHVHVIPVNMKSDAQREMGENIYNSLQEQGYEVLLDDRAERAGVKFADADLFGLPVRVTVGKKADEGIVEVKVRATGESEEVKVEELQTYIANILK.

It belongs to the class-II aminoacyl-tRNA synthetase family. ProS type 1 subfamily. As to quaternary structure, homodimer.

The protein localises to the cytoplasm. The catalysed reaction is tRNA(Pro) + L-proline + ATP = L-prolyl-tRNA(Pro) + AMP + diphosphate. Functionally, catalyzes the attachment of proline to tRNA(Pro) in a two-step reaction: proline is first activated by ATP to form Pro-AMP and then transferred to the acceptor end of tRNA(Pro). As ProRS can inadvertently accommodate and process non-cognate amino acids such as alanine and cysteine, to avoid such errors it has two additional distinct editing activities against alanine. One activity is designated as 'pretransfer' editing and involves the tRNA(Pro)-independent hydrolysis of activated Ala-AMP. The other activity is designated 'posttransfer' editing and involves deacylation of mischarged Ala-tRNA(Pro). The misacylated Cys-tRNA(Pro) is not edited by ProRS. This is Proline--tRNA ligase 1 from Bacillus cereus (strain ATCC 14579 / DSM 31 / CCUG 7414 / JCM 2152 / NBRC 15305 / NCIMB 9373 / NCTC 2599 / NRRL B-3711).